The primary structure comprises 204 residues: Elongation factor Ts (204 aa).

An involved in Mg(2+) ion dislocation from EF-Tu region spans residues 87–90; that stretch reads TDFV.

Belongs to the EF-Ts family.

Its subcellular location is the cytoplasm. Associates with the EF-Tu.GDP complex and induces the exchange of GDP to GTP. It remains bound to the aminoacyl-tRNA.EF-Tu.GTP complex up to the GTP hydrolysis stage on the ribosome. This is Elongation factor Ts from Frankia alni (strain DSM 45986 / CECT 9034 / ACN14a).